Reading from the N-terminus, the 992-residue chain is Presequence protease, mitochondrial (992 aa).

The N-terminal 30 residues, methionine 1–glycine 30, are a transit peptide targeting the mitochondrion. Histidine 91 contributes to the Zn(2+) binding site. Glutamate 94 functions as the Proton acceptor in the catalytic mechanism. Zn(2+) is bound at residue histidine 95. The active site involves glutamate 167. Glutamate 192 serves as a coordination point for Zn(2+).

It belongs to the peptidase M16 family. PreP subfamily. As to quaternary structure, monomer and homodimer; homodimerization is induced by binding of the substrate. Zn(2+) serves as cofactor.

It is found in the mitochondrion intermembrane space. The protein resides in the mitochondrion matrix. In terms of biological role, degrades mitochondrial transit peptides after their cleavage in the intermembrane space or in the matrix, and presequence peptides; clearance of these peptides is required to keep the presequence processing machinery running. Preferentially cleaves the N-terminal side of paired basic amino acid residues. Also degrades other unstructured peptides. May function as an ATP-dependent peptidase as opposed to a metalloendopeptidase. In Schizosaccharomyces pombe (strain 972 / ATCC 24843) (Fission yeast), this protein is Presequence protease, mitochondrial (cym1).